The chain runs to 225 residues: Imidazoleglycerol-phosphate dehydratase (225 aa).

It belongs to the imidazoleglycerol-phosphate dehydratase family.

It catalyses the reaction D-erythro-1-(imidazol-4-yl)glycerol 3-phosphate = 3-(imidazol-4-yl)-2-oxopropyl phosphate + H2O. It participates in amino-acid biosynthesis; L-histidine biosynthesis; L-histidine from 5-phospho-alpha-D-ribose 1-diphosphate: step 6/9. The sequence is that of Imidazoleglycerol-phosphate dehydratase (PTH3) from Pyricularia oryzae (strain 70-15 / ATCC MYA-4617 / FGSC 8958) (Rice blast fungus).